The sequence spans 433 residues: GTPase Der (433 aa).

2 consecutive EngA-type G domains span residues 3–167 (NIVA…QDTI) and 174–349 (PKIA…TNKT). GTP contacts are provided by residues 9-16 (GRPNVGKS), 56-60 (DTGGY), 119-122 (NKAD), 180-187 (GRPNVGKS), 227-231 (DTAGI), and 292-295 (NKWD). Positions 350 to 433 (QKISTAALNQ…VPVQLVFRKK (84 aa)) constitute a KH-like domain.

Belongs to the TRAFAC class TrmE-Era-EngA-EngB-Septin-like GTPase superfamily. EngA (Der) GTPase family. Associates with the 50S ribosomal subunit.

GTPase that plays an essential role in the late steps of ribosome biogenesis. The protein is GTPase Der of Amoebophilus asiaticus (strain 5a2).